The following is a 213-amino-acid chain: Putative 3-methyladenine DNA glycosylase (213 aa).

Belongs to the DNA glycosylase MPG family.

The chain is Putative 3-methyladenine DNA glycosylase from Corynebacterium jeikeium (strain K411).